Reading from the N-terminus, the 308-residue chain is Ribonuclease Z (308 aa).

Zn(2+) is bound by residues His-61, His-63, Asp-65, His-66, His-142, Asp-211, and His-270. Asp-65 acts as the Proton acceptor in catalysis.

This sequence belongs to the RNase Z family. Homodimer. The cofactor is Zn(2+).

It catalyses the reaction Endonucleolytic cleavage of RNA, removing extra 3' nucleotides from tRNA precursor, generating 3' termini of tRNAs. A 3'-hydroxy group is left at the tRNA terminus and a 5'-phosphoryl group is left at the trailer molecule.. Its function is as follows. Zinc phosphodiesterase, which displays some tRNA 3'-processing endonuclease activity. Probably involved in tRNA maturation, by removing a 3'-trailer from precursor tRNA. In Clostridium beijerinckii (strain ATCC 51743 / NCIMB 8052) (Clostridium acetobutylicum), this protein is Ribonuclease Z.